Reading from the N-terminus, the 295-residue chain is Craniofacial development protein 1 (295 aa).

2 stretches are compositionally biased toward acidic residues: residues 1 to 18 (MEEFDSEDFSTSDEDEDY) and 25 to 43 (YSEDDVNELVKEDEVDGEE). Disordered stretches follow at residues 1-155 (MEEF…KPKE) and 188-219 (FLKQTEKEKPQALVTSAATPPPAGSGIKRTSG). Residues 49–65 (KGKRRKAQSIPARKRKQ) show a composition bias toward basic residues. Positions 70 to 93 (LDEEEDGEEDSGGSSREEDEEEQE) are enriched in acidic residues. 4 positions are modified to phosphoserine: S80, S83, S84, and S112. The segment covering 120–130 (KSKAASSSQVK) has biased composition (low complexity). 2 stretches are compositionally biased toward basic and acidic residues: residues 145–155 (VKADELEKPKE) and 188–197 (FLKQTEKEKP). K146 participates in a covalent cross-link: Glycyl lysine isopeptide (Lys-Gly) (interchain with G-Cter in SUMO2). Residues 174–213 (VTKEVDATSKEAKSFLKQTEKEKPQALVTSAATPPPAGSG) form a hydrophilic region. Phosphoserine is present on S212. The BCNT-C domain maps to 214-295 (IKRTSGMSSL…RDLRLSKMKP (82 aa)). K215 bears the N6-methyllysine mark. At S246 the chain carries Phosphoserine.

The protein resides in the chromosome. The protein localises to the centromere. It is found in the kinetochore. Functionally, may play a role during embryogenesis. In Rattus norvegicus (Rat), this protein is Craniofacial development protein 1 (Cfdp1).